A 90-amino-acid polypeptide reads, in one-letter code: Small ribosomal subunit protein bS16 (90 aa).

It belongs to the bacterial ribosomal protein bS16 family.

This Geobacillus kaustophilus (strain HTA426) protein is Small ribosomal subunit protein bS16.